The sequence spans 121 residues: Ribosome-binding factor A (121 aa).

This sequence belongs to the RbfA family. As to quaternary structure, monomer. Binds 30S ribosomal subunits, but not 50S ribosomal subunits or 70S ribosomes.

It localises to the cytoplasm. Its function is as follows. One of several proteins that assist in the late maturation steps of the functional core of the 30S ribosomal subunit. Associates with free 30S ribosomal subunits (but not with 30S subunits that are part of 70S ribosomes or polysomes). Required for efficient processing of 16S rRNA. May interact with the 5'-terminal helix region of 16S rRNA. The protein is Ribosome-binding factor A of Paraburkholderia xenovorans (strain LB400).